A 324-amino-acid chain; its full sequence is Biotin synthase (324 aa).

A Radical SAM core domain is found at 37-264 (NEVQVAALMN…ASYVRLAAGR (228 aa)). Residues Cys-52, Cys-56, and Cys-59 each contribute to the [4Fe-4S] cluster site. Residues Cys-96, Cys-127, Cys-187, and Arg-259 each contribute to the [2Fe-2S] cluster site.

This sequence belongs to the radical SAM superfamily. Biotin synthase family. Homodimer. Requires [4Fe-4S] cluster as cofactor. It depends on [2Fe-2S] cluster as a cofactor.

It carries out the reaction (4R,5S)-dethiobiotin + (sulfur carrier)-SH + 2 reduced [2Fe-2S]-[ferredoxin] + 2 S-adenosyl-L-methionine = (sulfur carrier)-H + biotin + 2 5'-deoxyadenosine + 2 L-methionine + 2 oxidized [2Fe-2S]-[ferredoxin]. The protein operates within cofactor biosynthesis; biotin biosynthesis; biotin from 7,8-diaminononanoate: step 2/2. Functionally, catalyzes the conversion of dethiobiotin (DTB) to biotin by the insertion of a sulfur atom into dethiobiotin via a radical-based mechanism. The chain is Biotin synthase from Anaplasma marginale (strain Florida).